The following is a 363-amino-acid chain: Endopolygalacturonase A (363 aa).

An N-terminal signal peptide occupies residues 1-20 (MQLLQSSVIAATVGAALVAA). The propeptide occupies 21-28 (VPVELEAR). Cys-31 and Cys-46 are oxidised to a cystine. PbH1 repeat units lie at residues 158–187 (SDNL…DVGS), 188–209 (STYI…AINS), 210–230 (GSHI…SIGS), 239–260 (VEDV…RIKT), 268–290 (VSNV…IVEQ), and 302–347 (TNGI…SITG). Residue Asn-162 is glycosylated (N-linked (GlcNAc...) asparagine). Asp-202 (proton donor) is an active-site residue. Cys-204 and Cys-220 are oxidised to a cystine. The active site involves His-224. Cystine bridges form between Cys-330–Cys-335 and Cys-354–Cys-363.

The protein belongs to the glycosyl hydrolase 28 family.

It is found in the secreted. It carries out the reaction (1,4-alpha-D-galacturonosyl)n+m + H2O = (1,4-alpha-D-galacturonosyl)n + (1,4-alpha-D-galacturonosyl)m.. In terms of biological role, involved in maceration and soft-rotting of plant tissue. Hydrolyzes the 1,4-alpha glycosidic bonds of de-esterified pectate in the smooth region of the plant cell wall. This is Endopolygalacturonase A (pgaA) from Aspergillus flavus (strain ATCC MYA-384 / AF70).